We begin with the raw amino-acid sequence, 765 residues long: Ankyrin repeat and protein kinase domain-containing protein 1 (765 aa).

A Protein kinase domain is found at 22–289 (EGDWRLVASG…DITIETDILL (268 aa)). ATP contacts are provided by residues 28–36 (VASGGFSQV) and lysine 51. The Proton acceptor role is filled by aspartate 145. ANK repeat units lie at residues 361–390 (NKVT…DVDC), 394–423 (SGYT…DANR), 427–456 (DGWA…CVDA), 460–489 (EGWT…DPNL), 493–522 (EGKT…ELDA), 526–555 (NLRT…VPDA), 559–588 (SGYG…SLEL), 592–621 (QGWT…NMGA), 625–654 (VNWT…DPNA), 658–687 (SGWT…NVHA), 691–720 (VGWT…QLDV), and 724–753 (VSCT…SVAT).

The protein belongs to the protein kinase superfamily. TKL Ser/Thr protein kinase family. Highly expressed in brain and weakly expressed in placenta and spinal cord.

It catalyses the reaction L-seryl-[protein] + ATP = O-phospho-L-seryl-[protein] + ADP + H(+). The enzyme catalyses L-threonyl-[protein] + ATP = O-phospho-L-threonyl-[protein] + ADP + H(+). The protein is Ankyrin repeat and protein kinase domain-containing protein 1 (ANKK1) of Homo sapiens (Human).